The following is a 410-amino-acid chain: MKVYLVGGAVRDRLLGIPVQEQDWVVVGATPEELLKRKYRQVGRDFPVFLHPETKEEYALARTERKSAPGYYGFICDFSESVTLEEDLARRDLTINAMAMDEQGNLIDPYQGQRDLEEKLLRHVSSAFAEDPVRVLRVARFASRFHHLGFRIANETRLLMYSMVKQGELAHLIPERVWQEWQKSLEEKNPEQFILSLRSCDALRVILPEINSLFGVPNPHQYHQEIDTGIHSLMTLRASSELSEEPLVRFAALVHDLGKASTPIQAWPKHHGHEEEGTKLIRALCARLRIPNDYRDLAVTVARAHLNIHRVCELRPNTIVKLLEQVDAFRRPQLFHKILIACQADAESCGKTVVYRQTQLWNEILSECVKVTPQTFIVQGYEGKAIKEAMHQSRVACVERIMTSWKSNEK.

The ATP site is built by Gly-8 and Arg-11. Positions 8 and 11 each coordinate CTP. Residues Glu-21 and Asp-23 each contribute to the Mg(2+) site. Residues Arg-91, Arg-137, and Arg-140 each contribute to the ATP site. CTP-binding residues include Arg-91, Arg-137, and Arg-140. The region spanning 228 to 329 is the HD domain; that stretch reads TGIHSLMTLR…VKLLEQVDAF (102 aa).

It belongs to the tRNA nucleotidyltransferase/poly(A) polymerase family. Bacterial CCA-adding enzyme type 1 subfamily. Monomer. Can also form homodimers and oligomers. Requires Mg(2+) as cofactor. It depends on Ni(2+) as a cofactor.

It carries out the reaction a tRNA precursor + 2 CTP + ATP = a tRNA with a 3' CCA end + 3 diphosphate. The catalysed reaction is a tRNA with a 3' CCA end + 2 CTP + ATP = a tRNA with a 3' CCACCA end + 3 diphosphate. In terms of biological role, catalyzes the addition and repair of the essential 3'-terminal CCA sequence in tRNAs without using a nucleic acid template. Adds these three nucleotides in the order of C, C, and A to the tRNA nucleotide-73, using CTP and ATP as substrates and producing inorganic pyrophosphate. tRNA 3'-terminal CCA addition is required both for tRNA processing and repair. Also involved in tRNA surveillance by mediating tandem CCA addition to generate a CCACCA at the 3' terminus of unstable tRNAs. While stable tRNAs receive only 3'-terminal CCA, unstable tRNAs are marked with CCACCA and rapidly degraded. The sequence is that of Multifunctional CCA protein from Legionella pneumophila (strain Lens).